A 94-amino-acid chain; its full sequence is MLKPLGDRVVIELVQAEEKTASGIVLPDTAKEKPQEGKVIAVGTGRVLENGERVALEVAAGDRIIFSKYAGTEVKYEGTDYLILRESDILAVIG.

It belongs to the GroES chaperonin family. In terms of assembly, heptamer of 7 subunits arranged in a ring. Interacts with the chaperonin GroEL.

It is found in the cytoplasm. Its function is as follows. Together with the chaperonin GroEL, plays an essential role in assisting protein folding. The GroEL-GroES system forms a nano-cage that allows encapsulation of the non-native substrate proteins and provides a physical environment optimized to promote and accelerate protein folding. GroES binds to the apical surface of the GroEL ring, thereby capping the opening of the GroEL channel. The chain is Co-chaperonin GroES from Bacillus cytotoxicus (strain DSM 22905 / CIP 110041 / 391-98 / NVH 391-98).